Consider the following 548-residue polypeptide: Hydroxylamine reductase (548 aa).

Residues Cys3, Cys6, Cys15, and Cys21 each coordinate [4Fe-4S] cluster. Residues His240, Glu264, Cys308, Cys402, Cys430, Cys455, Glu490, and Lys492 each contribute to the hybrid [4Fe-2O-2S] cluster site. Cys402 carries the cysteine persulfide modification.

This sequence belongs to the HCP family. [4Fe-4S] cluster is required as a cofactor. Hybrid [4Fe-2O-2S] cluster serves as cofactor.

Its subcellular location is the cytoplasm. It carries out the reaction A + NH4(+) + H2O = hydroxylamine + AH2 + H(+). Functionally, catalyzes the reduction of hydroxylamine to form NH(3) and H(2)O. This is Hydroxylamine reductase from Parabacteroides distasonis (strain ATCC 8503 / DSM 20701 / CIP 104284 / JCM 5825 / NCTC 11152).